We begin with the raw amino-acid sequence, 235 residues long: Segregation and condensation protein A (235 aa).

This sequence belongs to the ScpA family. In terms of assembly, component of a cohesin-like complex composed of ScpA, ScpB and the Smc homodimer, in which ScpA and ScpB bind to the head domain of Smc. The presence of the three proteins is required for the association of the complex with DNA.

It is found in the cytoplasm. In terms of biological role, participates in chromosomal partition during cell division. May act via the formation of a condensin-like complex containing Smc and ScpB that pull DNA away from mid-cell into both cell halves. This chain is Segregation and condensation protein A, found in Streptococcus agalactiae serotype Ia (strain ATCC 27591 / A909 / CDC SS700).